Consider the following 993-residue polypeptide: Glycine dehydrogenase (decarboxylating) (993 aa).

At lysine 715 the chain carries N6-(pyridoxal phosphate)lysine.

It belongs to the GcvP family. The glycine cleavage system is composed of four proteins: P, T, L and H. Requires pyridoxal 5'-phosphate as cofactor.

It carries out the reaction N(6)-[(R)-lipoyl]-L-lysyl-[glycine-cleavage complex H protein] + glycine + H(+) = N(6)-[(R)-S(8)-aminomethyldihydrolipoyl]-L-lysyl-[glycine-cleavage complex H protein] + CO2. Its function is as follows. The glycine cleavage system catalyzes the degradation of glycine. The P protein binds the alpha-amino group of glycine through its pyridoxal phosphate cofactor; CO(2) is released and the remaining methylamine moiety is then transferred to the lipoamide cofactor of the H protein. The polypeptide is Glycine dehydrogenase (decarboxylating) (Xylella fastidiosa (strain Temecula1 / ATCC 700964)).